The primary structure comprises 364 residues: Aminomethyltransferase (364 aa).

It belongs to the GcvT family. As to quaternary structure, the glycine cleavage system is composed of four proteins: P, T, L and H.

It carries out the reaction N(6)-[(R)-S(8)-aminomethyldihydrolipoyl]-L-lysyl-[protein] + (6S)-5,6,7,8-tetrahydrofolate = N(6)-[(R)-dihydrolipoyl]-L-lysyl-[protein] + (6R)-5,10-methylene-5,6,7,8-tetrahydrofolate + NH4(+). Functionally, the glycine cleavage system catalyzes the degradation of glycine. The protein is Aminomethyltransferase of Shewanella loihica (strain ATCC BAA-1088 / PV-4).